A 348-amino-acid chain; its full sequence is UPF0283 membrane protein HAPS_0079 (348 aa).

The next 3 membrane-spanning stretches (helical) occupy residues 57–77, 86–106, and 203–223; these read FLAALALFGIATIAQSVQWLI, IYFAFAVAFFGISLAGVGAII, and ENAIIVAVSPLALVDILMVAW.

This sequence belongs to the UPF0283 family.

The protein localises to the cell inner membrane. This is UPF0283 membrane protein HAPS_0079 from Glaesserella parasuis serovar 5 (strain SH0165) (Haemophilus parasuis).